Reading from the N-terminus, the 736-residue chain is MSSKPTPITPELVASHGLKPDEYQRILKLIGREPSLTELGIFSAMWNEHCSYKSSRLHLKGLPTKAPWVLQGPGENAGVIDIGDNEAIVFKMESHNHPSFIEPYQGAATGVGGILRDVFTMGARPIACLNALSFGAPEHPKTRHLVSGVVAGVGGYGNSFGVPTVGGQVRFDTRYDGNILVNAMAVGLADADKIFLAAASGVGMPIVYLGSKTGRDGIHGASMASAVFDDDSAEKRPTVQVGDPFAEKLLLEACLEIMAADCVIAIQDMGAAGLTSSAVEMGAKGNLGVDLDLDKVPTREPGMTAYEMMLSESQERMLMVLKPEKEREAEAIFKKWGLDFAIVGHTTPTLRFVVKHGGEVKADLPIKELGDEAPLYDRPHVETPKLPIIHARDIKPPIGVVEALEKLIGSPELCSRRWVWEQYDHVIGGNTVQRPGGDAAVVRIKDGPKGLALTVDVTPRYCEADPYEGGKQAVAEAYRNITAVGGKPLAITDNLNFGNPERPEIMGQLVGCLKGIAEACVALEAPIVSGNVSLYNETNGRGILPTPSIGGVGLLDDFTKSATLAFKAAGEAILLIGETRGWLGQSVYLRDICGREEGAPPPVNLDAEKRNGTVVRGMIHSGTATAVHDLSDGGLLIALAEMAIAGHIGAALDAGPEAIVPHAWWFGEDQARYLVTVPADELLGVLTKLKAVGVPCLQIGKTAGHTLSIAGERAIDIKALEHAHEAWLPNYMGGKA.

His49 is a catalytic residue. Positions 52 and 91 each coordinate ATP. Glu93 contributes to the Mg(2+) binding site. Substrate-binding positions include 94-97 (SHNH) and Arg116. The active-site Proton acceptor is the His95. Asp117 contacts Mg(2+). Gln240 provides a ligand contact to substrate. Residue Asp268 participates in Mg(2+) binding. 312–314 (ESQ) serves as a coordination point for substrate. The ATP site is built by Asp493 and Gly530. Asn531 lines the Mg(2+) pocket. Substrate is bound at residue Ser533.

This sequence belongs to the FGAMS family. Monomer. Part of the FGAM synthase complex composed of 1 PurL, 1 PurQ and 2 PurS subunits.

It is found in the cytoplasm. It catalyses the reaction N(2)-formyl-N(1)-(5-phospho-beta-D-ribosyl)glycinamide + L-glutamine + ATP + H2O = 2-formamido-N(1)-(5-O-phospho-beta-D-ribosyl)acetamidine + L-glutamate + ADP + phosphate + H(+). It functions in the pathway purine metabolism; IMP biosynthesis via de novo pathway; 5-amino-1-(5-phospho-D-ribosyl)imidazole from N(2)-formyl-N(1)-(5-phospho-D-ribosyl)glycinamide: step 1/2. Functionally, part of the phosphoribosylformylglycinamidine synthase complex involved in the purines biosynthetic pathway. Catalyzes the ATP-dependent conversion of formylglycinamide ribonucleotide (FGAR) and glutamine to yield formylglycinamidine ribonucleotide (FGAM) and glutamate. The FGAM synthase complex is composed of three subunits. PurQ produces an ammonia molecule by converting glutamine to glutamate. PurL transfers the ammonia molecule to FGAR to form FGAM in an ATP-dependent manner. PurS interacts with PurQ and PurL and is thought to assist in the transfer of the ammonia molecule from PurQ to PurL. This is Phosphoribosylformylglycinamidine synthase subunit PurL from Rhodopseudomonas palustris (strain BisB18).